We begin with the raw amino-acid sequence, 294 residues long: MKKAMVIINPTSGGEKALDYKEKLENKAKEYFEYVETKITEKALDATHFAEEASREQYDAVVVFGGDGTVNEVISGIDERDYIPKLGIIPGGTGNLITKLLEINQDIDGAIDELDFDLTNKIDIGKANDNYFGYIFSIGSLPEAIHNVEIEDKTKFGILTYAVNTMKSVMTDQVFNIKVETENGNYVGEASHVLVLLTNYFADKKIFEENKDGYANILILKDASIFSKLSVIPDLLKGDVVANDNIEYIKARNIKISSDSELESDVDGDKSDNLPVEIKVLAQRVEVFSKPKED.

The DAGKc domain occupies 1-131 (MKKAMVIINP…IDIGKANDNY (131 aa)). ATP is bound by residues 9-13 (NPTSG), threonine 40, 66-72 (GDGTVNE), and threonine 93. Residues aspartate 212 and tyrosine 214 each coordinate Mg(2+). Residue aspartate 269 is the Proton acceptor of the active site.

Belongs to the diacylglycerol/lipid kinase family. Mg(2+) serves as cofactor.

In terms of biological role, may catalyze the ATP-dependent phosphorylation of lipids other than diacylglycerol (DAG). In fact, is not able to exhibit diacylglycerol kinase activity in vitro. The chain is Putative lipid kinase SP_1045 from Streptococcus pneumoniae serotype 4 (strain ATCC BAA-334 / TIGR4).